The chain runs to 260 residues: MNRHTDTHYPSLADKVVLISGGASGIGRAFVEAFVAQGSRVAFLDLDAEAGQGLAHALGANSLFLPCDVRDIERLKACVAEVERTWGAVDVLINNAARDDRHALADVSVEYWDERMQTNLRHAFFAAQAVAPGMARRGSGAIINMGSISWMRGRPGMVCYTTAKAALNGMTRTLARELGGQGIRINSLVPGAIRTERQDAMWAADPAGLEAASQAFIDQQMLKFRLDASDCARLALFLASDDSRGCTGQNFVVDAGLSIQ.

The Proton acceptor role is filled by Tyr160.

Belongs to the short-chain dehydrogenases/reductases (SDR) family.

The enzyme catalyses 6-sulfo-D-quinovose + NAD(+) = 6-deoxy-6-sulfo-D-glucono-1,5-lactone + NADH + H(+). Functionally, catalyzes the oxidation of sulfoquinovose to 6-deoxy-6-sulfo-D-glucono-1,5-lactone, with a strong preference for NAD(+) as the electron acceptor. Is involved in a degradation pathway of sulfoquinovose (SQ) that allows P.putida SQ1 to use SQ as the sole carbon and energy source for growth. This is Sulfoquinovose 1-dehydrogenase from Pseudomonas putida (Arthrobacter siderocapsulatus).